The following is a 189-amino-acid chain: SAGA-associated factor 11 homolog (189 aa).

The SGF11-type zinc-finger motif lies at 94-115 (CTCPNCDRLVAATRFAPHLEKC). Positions 128–189 (RRLATKEGSS…GSKKNNGKTF (62 aa)) are disordered. Residues 136-145 (SSASSTSTST) show a composition bias toward low complexity. The residue at position 165 (S165) is a Phosphoserine. The span at 175–189 (NSRNNGSKKNNGKTF) shows a compositional bias: low complexity.

The protein belongs to the SGF11 family. As to quaternary structure, component of some SAGA transcription coactivator-HAT complexes, at least composed of Ada2b, not/nonstop, Pcaf/Gcn5, Sgf11 and Spt3. Within the SAGA complex, Sgf11, e(y)2, and not/nonstop form an additional subcomplex of SAGA called the DUB module (deubiquitination module). Interacts directly with not/nonstop. Interacts with the AMEX complex component xmas-2. Interacts with Cbp80; important for promoter recruitment of Sgf11 that is not associated with the DUB module.

The protein resides in the nucleus. It is found in the nucleoplasm. The protein localises to the cytoplasm. In terms of biological role, component of the transcription regulatory histone acetylation (HAT) complex SAGA, a multiprotein complex that activates transcription by remodeling chromatin and mediating histone acetylation and deubiquitination. Within the SAGA complex, participates in a subcomplex that specifically deubiquitinates histone H2B. The SAGA complex is recruited to specific gene promoters by activators, where it is required for transcription. Required for nuclear receptor-mediated transactivation. Binds independently on SAGA to promoters in an RNA-dependent manner. Binds to mRNA and is essential for total mRNA export from the nucleus. Required to counteract heterochromatin silencing. Controls the development of neuronal connectivity in visual system by being required for accurate axon targeting in the optic lobe. Required for expression of ecdysone-induced genes such as br/broad. This chain is SAGA-associated factor 11 homolog, found in Drosophila virilis (Fruit fly).